The primary structure comprises 194 residues: Molybdenum cofactor guanylyltransferase (194 aa).

Residues 12–14 (LAG), K25, N53, D70, and D100 each bind GTP. D100 provides a ligand contact to Mg(2+).

It belongs to the MobA family. As to quaternary structure, monomer. Requires Mg(2+) as cofactor.

The protein localises to the cytoplasm. It catalyses the reaction Mo-molybdopterin + GTP + H(+) = Mo-molybdopterin guanine dinucleotide + diphosphate. Its function is as follows. Transfers a GMP moiety from GTP to Mo-molybdopterin (Mo-MPT) cofactor (Moco or molybdenum cofactor) to form Mo-molybdopterin guanine dinucleotide (Mo-MGD) cofactor. This is Molybdenum cofactor guanylyltransferase from Vibrio atlanticus (strain LGP32) (Vibrio splendidus (strain Mel32)).